The following is a 313-amino-acid chain: E3 ubiquitin-protein ligase siah2 (313 aa).

The disordered stretch occupies residues 1 to 49 (MSRPSSAGPCASKPCGKQKQPPPPPPHAPSLPATISGGPGASAPPAPTA). The span at 20–29 (QPPPPPPHAP) shows a compositional bias: pro residues. An RING-type zinc finger spans residues 69–104 (CPVCFDYVLPPILQCQAGHLVCNQCRQKLSCCPTCR). Residues 119-311 (VASAVLFPCK…LGINVTISTC (193 aa)) are SBD. The SIAH-type zinc finger occupies 122-182 (AVLFPCKYAS…VMQHLTHSHK (61 aa)). Zn(2+) is bound by residues Cys127, Cys134, His146, Cys150, Cys157, Cys164, His176, and His181.

Belongs to the SINA (Seven in absentia) family. In terms of assembly, homodimer. As to expression, widely expressed in early embryos until stage 40. It is then expressed in brain, spinal cord and in the developing and mature eye.

Its subcellular location is the cytoplasm. The enzyme catalyses S-ubiquitinyl-[E2 ubiquitin-conjugating enzyme]-L-cysteine + [acceptor protein]-L-lysine = [E2 ubiquitin-conjugating enzyme]-L-cysteine + N(6)-ubiquitinyl-[acceptor protein]-L-lysine.. It participates in protein modification; protein ubiquitination. E3 ubiquitin-protein ligase that mediates ubiquitination and subsequent proteasomal degradation of target proteins. E3 ubiquitin ligases accept ubiquitin from an E2 ubiquitin-conjugating enzyme in the form of a thioester and then directly transfers the ubiquitin to targeted substrates. Involved in eye morphogenesis, probably triggers the ubiquitin-mediated degradation of different substrates. May play a role in the regulation of the cellular clock function. This chain is E3 ubiquitin-protein ligase siah2 (siah2), found in Xenopus laevis (African clawed frog).